A 229-amino-acid chain; its full sequence is Flagellar L-ring protein (229 aa).

Positions Met-1 to Gly-25 are cleaved as a signal peptide. A lipid anchor (N-palmitoyl cysteine) is attached at Cys-26. Cys-26 carries S-diacylglycerol cysteine lipidation.

Belongs to the FlgH family. In terms of assembly, the basal body constitutes a major portion of the flagellar organelle and consists of four rings (L,P,S, and M) mounted on a central rod.

The protein resides in the cell outer membrane. It is found in the bacterial flagellum basal body. Assembles around the rod to form the L-ring and probably protects the motor/basal body from shearing forces during rotation. This Burkholderia vietnamiensis (strain G4 / LMG 22486) (Burkholderia cepacia (strain R1808)) protein is Flagellar L-ring protein.